We begin with the raw amino-acid sequence, 1374 residues long: DNA-directed RNA polymerase subunit beta' (1374 aa).

The interval 1 to 47 (MTSTSPKSRKPSTKTTKSKSKSKSKSKAAKAAAAGASPALARTPPQF) is disordered. A compositionally biased stretch (basic residues) spans 7–28 (KSRKPSTKTTKSKSKSKSKSKA). Residues 29–39 (AKAAAAGASPA) are compositionally biased toward low complexity. Zn(2+)-binding residues include Cys258, Cys325, Cys332, and Cys335. Positions 1344-1374 (RPTGENELEEEQLPDPSALEGLQQEGLLTEE) are disordered. Residues 1362-1374 (LEGLQQEGLLTEE) show a composition bias toward low complexity.

It belongs to the RNA polymerase beta' chain family. RpoC2 subfamily. As to quaternary structure, in cyanobacteria the RNAP catalytic core is composed of 2 alpha, 1 beta, 1 beta', 1 gamma and 1 omega subunit. When a sigma factor is associated with the core the holoenzyme is formed, which can initiate transcription. Requires Zn(2+) as cofactor.

The enzyme catalyses RNA(n) + a ribonucleoside 5'-triphosphate = RNA(n+1) + diphosphate. DNA-dependent RNA polymerase catalyzes the transcription of DNA into RNA using the four ribonucleoside triphosphates as substrates. This is DNA-directed RNA polymerase subunit beta' from Prochlorococcus marinus (strain MIT 9313).